We begin with the raw amino-acid sequence, 397 residues long: Proteasome-activating nucleotidase (397 aa).

Positions 15-58 (DYVTFLKRRIRQLELQVRTLEADKERLERELSRLRMEMSRLRQP) form a coiled coil. ATP is bound by residues 182–187 (GCGKTL) and histidine 321. Positions 395 to 397 (MYG) are docks into pockets in the proteasome alpha-ring to cause gate opening.

This sequence belongs to the AAA ATPase family. In terms of assembly, homohexamer. The hexameric complex has a two-ring architecture resembling a top hat that caps the 20S proteasome core at one or both ends. Upon ATP-binding, the C-terminus of PAN interacts with the alpha-rings of the proteasome core by binding to the intersubunit pockets.

It is found in the cytoplasm. Functionally, ATPase which is responsible for recognizing, binding, unfolding and translocation of substrate proteins into the archaeal 20S proteasome core particle. Is essential for opening the gate of the 20S proteasome via an interaction with its C-terminus, thereby allowing substrate entry and access to the site of proteolysis. Thus, the C-termini of the proteasomal ATPase function like a 'key in a lock' to induce gate opening and therefore regulate proteolysis. Unfolding activity requires energy from ATP hydrolysis, whereas ATP binding alone promotes ATPase-20S proteasome association which triggers gate opening, and supports translocation of unfolded substrates. The chain is Proteasome-activating nucleotidase from Thermococcus kodakarensis (strain ATCC BAA-918 / JCM 12380 / KOD1) (Pyrococcus kodakaraensis (strain KOD1)).